The chain runs to 310 residues: Homoserine kinase (310 aa).

91–101 (PIGSGLGSSAC) contacts ATP.

It belongs to the GHMP kinase family. Homoserine kinase subfamily.

It is found in the cytoplasm. It carries out the reaction L-homoserine + ATP = O-phospho-L-homoserine + ADP + H(+). It functions in the pathway amino-acid biosynthesis; L-threonine biosynthesis; L-threonine from L-aspartate: step 4/5. Catalyzes the ATP-dependent phosphorylation of L-homoserine to L-homoserine phosphate. The sequence is that of Homoserine kinase from Escherichia coli (strain K12 / MC4100 / BW2952).